A 169-amino-acid chain; its full sequence is MVDEATKKTLAAIPLLKTKAGPRDGKDWVDRLKEEYTSLIKYVSNNKEADNDWFRLESNKEGTRWFGKCWYIHNLLKYEFDVEFDIPITYPTTAPEIALPELDGKTAKMYRGGKICMTDHFKPLWGRNVPRFGIAHAMALGLGPWLAVEIPDLIEKGLIKHKDKSESSR.

C116 (glycyl thioester intermediate) is an active-site residue.

Belongs to the ubiquitin-conjugating enzyme family. UFC1 subfamily.

Its function is as follows. E2-like enzyme which forms an intermediate with UFM1 via a thioester linkage. This chain is Ubiquitin-fold modifier-conjugating enzyme 1, found in Nematostella vectensis (Starlet sea anemone).